Here is a 165-residue protein sequence, read N- to C-terminus: MAGRLDEDLKDVTLLGNQNTKYLFEYSPKILEVFDNNHPNRDYFVKFNCPEFTSLCPKTGQPDFATIYISYIPEQRMVESKSLKLYLFSFRNHGDFHEDCMNVIMNDLIKLMDPRYIEVWGKFTPRGGISIDPYCNYGRPGTKYEQMADYRMMNHDLYPETIDNR.

Cys56 serves as the catalytic Thioimide intermediate. Catalysis depends on Asp63, which acts as the Proton donor. Substrate contacts are provided by residues 78-80 (VES) and 97-98 (HE).

This sequence belongs to the GTP cyclohydrolase I family. QueF type 1 subfamily.

It localises to the cytoplasm. It catalyses the reaction 7-aminomethyl-7-carbaguanine + 2 NADP(+) = 7-cyano-7-deazaguanine + 2 NADPH + 3 H(+). Its pathway is tRNA modification; tRNA-queuosine biosynthesis. Catalyzes the NADPH-dependent reduction of 7-cyano-7-deazaguanine (preQ0) to 7-aminomethyl-7-deazaguanine (preQ1). This is NADPH-dependent 7-cyano-7-deazaguanine reductase from Bacillus thuringiensis subsp. konkukian (strain 97-27).